Reading from the N-terminus, the 213-residue chain is Outer-membrane lipoprotein carrier protein (213 aa).

Positions 1-23 are cleaved as a signal peptide; that stretch reads MKKLLKQSLLGFALVSMTGAAFA.

This sequence belongs to the LolA family. As to quaternary structure, monomer.

Its subcellular location is the periplasm. In terms of biological role, participates in the translocation of lipoproteins from the inner membrane to the outer membrane. Only forms a complex with a lipoprotein if the residue after the N-terminal Cys is not an aspartate (The Asp acts as a targeting signal to indicate that the lipoprotein should stay in the inner membrane). This is Outer-membrane lipoprotein carrier protein from Actinobacillus pleuropneumoniae serotype 3 (strain JL03).